The chain runs to 208 residues: Adenylate kinase (208 aa).

10–15 contributes to the ATP binding site; that stretch reads GAGKGT. The segment at 30-59 is NMP; it reads STGEMLRAAVAAGTPVGLKAKDVMASGGLV. AMP contacts are provided by residues T31, R36, 57-59, 85-88, and Q92; these read GLV and GFPR. The interval 126–142 is LID; sequence SRVAEMTARGEQVRADD. ATP is bound at residue R127. AMP contacts are provided by R139 and R150. Residue M178 coordinates ATP.

This sequence belongs to the adenylate kinase family. In terms of assembly, monomer.

The protein resides in the cytoplasm. It carries out the reaction AMP + ATP = 2 ADP. It participates in purine metabolism; AMP biosynthesis via salvage pathway; AMP from ADP: step 1/1. Catalyzes the reversible transfer of the terminal phosphate group between ATP and AMP. Plays an important role in cellular energy homeostasis and in adenine nucleotide metabolism. The polypeptide is Adenylate kinase (Nitrobacter hamburgensis (strain DSM 10229 / NCIMB 13809 / X14)).